Here is a 583-residue protein sequence, read N- to C-terminus: CBP80/20-dependent translation initiation factor (583 aa).

Disordered regions lie at residues 42-95, 129-154, 190-251, and 294-325; these read TDKT…PLDM, RQRN…RVEG, RKRN…GYSQ, and SNTD…RPKI. Residues 43–53 are compositionally biased toward basic and acidic residues; the sequence is DKTEGDGESDK. Polar residues predominate over residues 54-63; sequence TQSNVSQWTV. 2 stretches are compositionally biased toward basic and acidic residues: residues 65-80 and 141-154; these read CTER…RNRE and IDRD…RVEG. Residues 190-199 show a composition bias toward basic residues; that stretch reads RKRNDRRKQQ. Low complexity predominate over residues 200-213; that stretch reads KPQGGNKQPPSQQN. The segment covering 298–324 has biased composition (basic and acidic residues); that stretch reads STERHCPPANDSEAKRKESIQSRDRPK. The 202-residue stretch at 361 to 562 folds into the MIF4G domain; the sequence is IEILNSMRNN…LEVIELHANS (202 aa).

It belongs to the CTIF family.

The protein resides in the cytoplasm. It is found in the perinuclear region. Specifically required for the pioneer round of mRNA translation mediated by the cap-binding complex (CBC), that takes place during or right after mRNA export via the nuclear pore complex (NPC). In contrast, it is not involved in steady state translation, that takes place when the CBC complex is replaced by cytoplasmic cap-binding protein eIF4E. Also required for nonsense-mediated mRNA decay (NMD), the pioneer round of mRNA translation mediated by the cap-binding complex playing a central role in nonsense-mediated mRNA decay (NMD). The sequence is that of CBP80/20-dependent translation initiation factor (ctif) from Xenopus tropicalis (Western clawed frog).